The chain runs to 361 residues: Homer protein homolog 3 (361 aa).

Positions 1–80 (MSTAREQPIF…TKTSQKFGQW (80 aa)) are required for interaction with NFATC2. The WH1 domain occupies 1–113 (MSTAREQPIF…EKFQEVKEAA (113 aa)). The segment at 114-169 (RLAREKSQDGGELTSPALGLASHQVPPSPLVSANGPGEEKLFRSQSADAPGPTERE) is disordered. Serine 120 and serine 159 each carry phosphoserine. Coiled-coil stretches lie at residues 191 to 243 (ALQD…SEVT) and 254 to 358 (GQSL…RLAE).

Belongs to the Homer family. Tetramer. Isoform 1 and isoform 2 encode coiled-coil structures that mediate homo- and heteromultimerization. Interacts with NFATC2; interaction is calcium independent; interaction competes with PPP3CA for NFATC2 binding; interaction is reduced by AKT activation. Interacts with NFATC1 and NFATC4. Interacts with SHANK1; forms a high-order complex at least composed of SHANK1 and HOMER3; the complex formation is regulated by CAMK2A-mediated phosphorylation.

Its subcellular location is the cytoplasm. The protein localises to the postsynaptic density. It is found in the synapse. In terms of biological role, postsynaptic density scaffolding protein. Binds and cross-links cytoplasmic regions of GRM1, GRM5, ITPR1, DNM3, RYR1, RYR2, SHANK1 and SHANK3. By physically linking GRM1 and GRM5 with ER-associated ITPR1 receptors, it aids the coupling of surface receptors to intracellular calcium release. Isoforms can be differently regulated and may play an important role in maintaining the plasticity at glutamatergic synapses. Negatively regulates T cell activation by inhibiting the calcineurin-NFAT pathway. Acts by competing with calcineurin/PPP3CA for NFAT protein binding, hence preventing NFAT activation by PPP3CA. The chain is Homer protein homolog 3 from Homo sapiens (Human).